We begin with the raw amino-acid sequence, 463 residues long: O-phospho-L-seryl-tRNA:Cys-tRNA synthase 2 (463 aa).

Pyridoxal 5'-phosphate-binding positions include 154–155 (AR), N259, and 282–284 (SGH). K285 is subject to N6-(pyridoxal phosphate)lysine.

The protein belongs to the SepCysS family. In terms of assembly, homodimer. Interacts with SepRS. Requires pyridoxal 5'-phosphate as cofactor.

It carries out the reaction O-phospho-L-seryl-tRNA(Cys) + hydrogen sulfide + H(+) = L-cysteinyl-tRNA(Cys) + phosphate. Its function is as follows. Converts O-phospho-L-seryl-tRNA(Cys) (Sep-tRNA(Cys)) to L-cysteinyl-tRNA(Cys) (Cys-tRNA(Cys)). The polypeptide is O-phospho-L-seryl-tRNA:Cys-tRNA synthase 2 (Methanocella arvoryzae (strain DSM 22066 / NBRC 105507 / MRE50)).